The following is a 470-amino-acid chain: Diaminobutyrate--2-oxoglutarate aminotransferase (470 aa).

An N6-(pyridoxal phosphate)lysine modification is found at Lys-304.

This sequence belongs to the class-III pyridoxal-phosphate-dependent aminotransferase family. Requires pyridoxal 5'-phosphate as cofactor.

The catalysed reaction is L-2,4-diaminobutanoate + 2-oxoglutarate = L-aspartate 4-semialdehyde + L-glutamate. It functions in the pathway siderophore biosynthesis; rhizobactin biosynthesis. In Rhizobium meliloti (strain 1021) (Ensifer meliloti), this protein is Diaminobutyrate--2-oxoglutarate aminotransferase (rhbA).